The chain runs to 1058 residues: Receptor-type guanylate cyclase gcy-22 (1058 aa).

The signal sequence occupies residues 1–23; the sequence is MSFISKCFICLLFSTYFLPPVNS. Over 25–470 the chain is Extracellular; sequence VLQVGFLAAN…PKSFTDQYLA (446 aa). Residues asparagine 36, asparagine 73, asparagine 201, asparagine 215, asparagine 277, asparagine 302, asparagine 324, asparagine 350, and asparagine 386 are each glycosylated (N-linked (GlcNAc...) asparagine). A helical transmembrane segment spans residues 471–491; the sequence is IILGCTAAALVLIIAVISTIV. Over 492 to 1058 the chain is Cytoplasmic; sequence FLVRSKRQEE…IEAKENGESI (567 aa). Positions 501–809 constitute a Protein kinase domain; the sequence is EERLNQLWQV…SSNLMDHVFN (309 aa). The stretch at 811-840 forms a coiled coil; that stretch reads LEQYASNLEDEVQARMKELTEEKKRSDVLL. The 131-residue stretch at 867–997 folds into the Guanylate cyclase domain; the sequence is TIFFSDVVSF…DSVNTASRME (131 aa).

Belongs to the adenylyl cyclase class-4/guanylyl cyclase family. Expression in ASER neuron begins at an early larval stage and is maintained in the adult.

Its subcellular location is the cell membrane. It carries out the reaction GTP = 3',5'-cyclic GMP + diphosphate. Guanylate cyclase involved in the production of the second messenger cGMP. Regulates chemotaxis responses toward Li(1-), Mg(2+), Cl(1-), Br(1)- and I(1-) salt ions and methionine in ASE right (ASER) sensory neuron. May regulate ASER neuronal activity such as axon sprouting and calcium responses to changes in salt concentrations. The polypeptide is Receptor-type guanylate cyclase gcy-22 (Caenorhabditis elegans).